A 489-amino-acid chain; its full sequence is Betaine aldehyde dehydrogenase (489 aa).

K(+) contacts are provided by T26 and D93. 150–152 (GAW) lines the NAD(+) pocket. The active-site Charge relay system is the K162. 176–179 (KPSE) is an NAD(+) binding site. Residue V180 coordinates K(+). 229 to 232 (GVET) contacts NAD(+). L245 lines the K(+) pocket. Catalysis depends on E251, which acts as the Proton acceptor. Residues G253, C285, and E386 each contribute to the NAD(+) site. C285 serves as the catalytic Nucleophile. C285 bears the Cysteine sulfenic acid (-SOH) mark. Residues K456 and G459 each coordinate K(+). The Charge relay system role is filled by E463.

The protein belongs to the aldehyde dehydrogenase family. As to quaternary structure, dimer of dimers. The cofactor is K(+).

The enzyme catalyses betaine aldehyde + NAD(+) + H2O = glycine betaine + NADH + 2 H(+). Its pathway is amine and polyamine biosynthesis; betaine biosynthesis via choline pathway; betaine from betaine aldehyde: step 1/1. In terms of biological role, involved in the biosynthesis of the osmoprotectant glycine betaine. Catalyzes the irreversible oxidation of betaine aldehyde to the corresponding acid. This chain is Betaine aldehyde dehydrogenase, found in Burkholderia orbicola (strain AU 1054).